The chain runs to 370 residues: Dihydroorotate dehydrogenase (quinone) (370 aa).

FMN is bound by residues 67–71 and threonine 91; that span reads AGFDK. Residue lysine 71 coordinates substrate. 116–120 serves as a coordination point for substrate; that stretch reads NRMGF. Asparagine 146 and asparagine 179 together coordinate FMN. Asparagine 179 is a substrate binding site. Residue serine 182 is the Nucleophile of the active site. Asparagine 184 lines the substrate pocket. Lysine 222 and threonine 250 together coordinate FMN. Residue 251–252 participates in substrate binding; that stretch reads NT. FMN contacts are provided by residues glycine 276, glycine 305, and 326-327; that span reads YS.

Belongs to the dihydroorotate dehydrogenase family. Type 2 subfamily. As to quaternary structure, monomer. Requires FMN as cofactor.

The protein resides in the cell membrane. It catalyses the reaction (S)-dihydroorotate + a quinone = orotate + a quinol. It functions in the pathway pyrimidine metabolism; UMP biosynthesis via de novo pathway; orotate from (S)-dihydroorotate (quinone route): step 1/1. Catalyzes the conversion of dihydroorotate to orotate with quinone as electron acceptor. The protein is Dihydroorotate dehydrogenase (quinone) of Streptomyces griseus subsp. griseus (strain JCM 4626 / CBS 651.72 / NBRC 13350 / KCC S-0626 / ISP 5235).